Here is a 205-residue protein sequence, read N- to C-terminus: High frequency lysogenization protein HflD homolog (205 aa).

Belongs to the HflD family.

It localises to the cytoplasm. Its subcellular location is the cell inner membrane. In Shewanella baltica (strain OS223), this protein is High frequency lysogenization protein HflD homolog.